An 84-amino-acid chain; its full sequence is Magnetosome protein MamR (84 aa).

The protein belongs to the magnetosome MamR family.

It localises to the magnetosome. May play a role in controlling magnetite number and size. Coexpression of mamLQRBIEMO in a deletion of the 17 gene mamAB operon restores magnetosome vesicle formation but not magnetite biosynthesis. The sequence is that of Magnetosome protein MamR from Magnetospirillum gryphiswaldense (strain DSM 6361 / JCM 21280 / NBRC 15271 / MSR-1).